The primary structure comprises 470 residues: Aspartyl aminopeptidase (470 aa).

H92 contributes to the Zn(2+) binding site. A substrate-binding site is contributed by H166. D263 is a binding site for Zn(2+). E299 contacts substrate. Zn(2+)-binding residues include E300 and D343. 4 residues coordinate substrate: D343, H346, K371, and Y378. H437 lines the Zn(2+) pocket.

Belongs to the peptidase M18 family. Tetrahedron-shaped homododecamer built from six homodimers. It depends on Zn(2+) as a cofactor. In terms of tissue distribution, expressed in various cell types and tissues including the pharynx, neurons, body wall muscle, intestine and vulva.

It is found in the cytoplasm. The protein localises to the cytosol. It catalyses the reaction Release of an N-terminal aspartate or glutamate from a peptide, with a preference for aspartate.. Its function is as follows. Aminopeptidase with specificity towards an acidic amino acid at the N-terminus. Plays a role in membrane trafficking and is specifically involved in the recycling and degradation of endocytic cargo. This chain is Aspartyl aminopeptidase, found in Caenorhabditis elegans.